The primary structure comprises 292 residues: Ribosomal RNA small subunit methyltransferase A (292 aa).

The S-adenosyl-L-methionine site is built by N28, L30, G55, E76, D101, and N126.

It belongs to the class I-like SAM-binding methyltransferase superfamily. rRNA adenine N(6)-methyltransferase family. RsmA subfamily.

The protein localises to the cytoplasm. It carries out the reaction adenosine(1518)/adenosine(1519) in 16S rRNA + 4 S-adenosyl-L-methionine = N(6)-dimethyladenosine(1518)/N(6)-dimethyladenosine(1519) in 16S rRNA + 4 S-adenosyl-L-homocysteine + 4 H(+). Specifically dimethylates two adjacent adenosines (A1518 and A1519) in the loop of a conserved hairpin near the 3'-end of 16S rRNA in the 30S particle. May play a critical role in biogenesis of 30S subunits. This is Ribosomal RNA small subunit methyltransferase A from Bacillus cereus (strain G9842).